Consider the following 209-residue polypeptide: Regulator of G-protein signaling 1 (209 aa).

In terms of domain architecture, RGS spans 85 to 200 (SLEKLLANQT…LKSDIYLNLL (116 aa)).

Interacts with GNAI1 and GNAQ. In terms of tissue distribution, detected in peripheral blood monocytes. Expression is relatively low in B-cells and chronic lymphocytic leukemia B-cells; however, in other types of malignant B-cell such as non-Hodgkin lymphoma and hairy cell leukemia, expression is constitutively high.

The protein resides in the cell membrane. Its subcellular location is the cytoplasm. It is found in the cytosol. In terms of biological role, regulates G protein-coupled receptor signaling cascades, including signaling downstream of the N-formylpeptide chemoattractant receptors and leukotriene receptors. Inhibits B cell chemotaxis toward CXCL12. Inhibits signal transduction by increasing the GTPase activity of G protein alpha subunits thereby driving them into their inactive GDP-bound form. In Homo sapiens (Human), this protein is Regulator of G-protein signaling 1 (RGS1).